Reading from the N-terminus, the 319-residue chain is MKKIAVLTSGGDVPGMNAAIRAVVRKAAFHGINVVGIKHGYEGLVKGYLEELDLGSVGGIIQRGGTHLNSARCPEFKEDAVQQQGIENLRAAGIEGLVVIGGDGSYRGAMDLVKKGFPAVGVPGTIDNDVPGTEYTIGFDTALNTVVESIDKIRDTATSHENSFIVEVMGRDAGDIALWAGLAAGAETVLIPEEDYDLDDIVARLDRGAARGKKHSIIIVAEGVMSGNELAKLIKEKTGKETRVSVLGHIQRGGSPTARDRVLASQFGAHAVELLMEGKYGRAVGIRNHQVIDYDMPEAFEKNHEADVSLYTLMKELSI.

Gly-11 contacts ATP. Residue 21 to 25 (RAVVR) participates in ADP binding. Residues 72–73 (RC) and 102–105 (GDGS) contribute to the ATP site. Asp-103 provides a ligand contact to Mg(2+). 125-127 (TID) is a binding site for substrate. Asp-127 acts as the Proton acceptor in catalysis. Arg-154 contributes to the ADP binding site. 169-171 (MGR) lines the substrate pocket. ADP-binding positions include 185 to 187 (GAE), Arg-211, and 213 to 215 (KKH). Substrate is bound by residues Glu-222, Arg-243, and 249–252 (HIQR).

It belongs to the phosphofructokinase type A (PFKA) family. ATP-dependent PFK group I subfamily. Prokaryotic clade 'B1' sub-subfamily. In terms of assembly, homotetramer. The cofactor is Mg(2+).

The protein localises to the cytoplasm. It catalyses the reaction beta-D-fructose 6-phosphate + ATP = beta-D-fructose 1,6-bisphosphate + ADP + H(+). It functions in the pathway carbohydrate degradation; glycolysis; D-glyceraldehyde 3-phosphate and glycerone phosphate from D-glucose: step 3/4. With respect to regulation, allosterically activated by ADP and other diphosphonucleosides, and allosterically inhibited by phosphoenolpyruvate. Catalyzes the phosphorylation of D-fructose 6-phosphate to fructose 1,6-bisphosphate by ATP, the first committing step of glycolysis. The chain is ATP-dependent 6-phosphofructokinase from Lysinibacillus sphaericus (Bacillus sphaericus).